The following is a 424-amino-acid chain: Ankyrin repeat domain-containing protein 61 (424 aa).

ANK repeat units lie at residues 80-109 (LSFL…DPEA), 113-169 (QGFT…ARVD), 172-201 (HRHC…QVNA), 205-234 (SSMT…SVNC), 239-278 (TGNT…QVNA), 282-311 (DGQA…NVNI), and 315-348 (NGES…PLRL).

The chain is Ankyrin repeat domain-containing protein 61 (ANKRD61) from Bos taurus (Bovine).